The primary structure comprises 236 residues: Geranylgeranylglyceryl phosphate synthase (236 aa).

K13 serves as a coordination point for sn-glycerol 1-phosphate. D15 and T42 together coordinate Mg(2+). Sn-glycerol 1-phosphate is bound by residues 161–166 (YVEYSG), G191, and 211–212 (GD).

The protein belongs to the GGGP/HepGP synthase family. Group I subfamily. The cofactor is Mg(2+).

The protein resides in the cytoplasm. It carries out the reaction sn-glycerol 1-phosphate + (2E,6E,10E)-geranylgeranyl diphosphate = sn-3-O-(geranylgeranyl)glycerol 1-phosphate + diphosphate. It participates in membrane lipid metabolism; glycerophospholipid metabolism. In terms of biological role, prenyltransferase that catalyzes the transfer of the geranylgeranyl moiety of geranylgeranyl diphosphate (GGPP) to the C3 hydroxyl of sn-glycerol-1-phosphate (G1P). This reaction is the first ether-bond-formation step in the biosynthesis of archaeal membrane lipids. In Halobacterium salinarum (strain ATCC 700922 / JCM 11081 / NRC-1) (Halobacterium halobium), this protein is Geranylgeranylglyceryl phosphate synthase.